Here is a 572-residue protein sequence, read N- to C-terminus: Proline dehydrogenase 1, mitochondrial (572 aa).

A compositionally biased stretch (low complexity) spans 105 to 124 (NHSNQTNNVNNKNYNNNNNN). Residues 105–140 (NHSNQTNNVNNKNYNNNNNNFEKDDKFGPPNNQNNN) form a disordered region.

This sequence belongs to the proline oxidase family. FAD serves as cofactor.

It localises to the mitochondrion matrix. The catalysed reaction is L-proline + a quinone = (S)-1-pyrroline-5-carboxylate + a quinol + H(+). Its pathway is amino-acid degradation; L-proline degradation into L-glutamate; L-glutamate from L-proline: step 1/2. In terms of biological role, converts proline to delta-1-pyrroline-5-carboxylate. The sequence is that of Proline dehydrogenase 1, mitochondrial (prodh) from Dictyostelium discoideum (Social amoeba).